Consider the following 145-residue polypeptide: Bacilliredoxin BLi02578/BL01507 (145 aa).

Belongs to the bacilliredoxin family.

In Bacillus licheniformis (strain ATCC 14580 / DSM 13 / JCM 2505 / CCUG 7422 / NBRC 12200 / NCIMB 9375 / NCTC 10341 / NRRL NRS-1264 / Gibson 46), this protein is Bacilliredoxin BLi02578/BL01507.